The chain runs to 273 residues: Phosphatidylglycerol--prolipoprotein diacylglyceryl transferase (273 aa).

The next 7 membrane-spanning stretches (helical) occupy residues 19–39, 55–75, 90–110, 125–145, 174–194, 202–222, and 230–250; these read VHWYGLMYLLAFLCAWGLASY, LVFYGALGVVLGGRVGYVLFY, VWTGGMSFHGGFIGVMLAMIL, FIAPCVPTGLMFGRIGNFIGA, PSQIYQAICEGLLLFILLWWF, MAVSALFLMGYGVARFVVEFF, and GFILFGWMTKGQILTVPMLLI. Residue R138 coordinates a 1,2-diacyl-sn-glycero-3-phospho-(1'-sn-glycerol).

It belongs to the Lgt family.

It is found in the cell inner membrane. The catalysed reaction is L-cysteinyl-[prolipoprotein] + a 1,2-diacyl-sn-glycero-3-phospho-(1'-sn-glycerol) = an S-1,2-diacyl-sn-glyceryl-L-cysteinyl-[prolipoprotein] + sn-glycerol 1-phosphate + H(+). It participates in protein modification; lipoprotein biosynthesis (diacylglyceryl transfer). Functionally, catalyzes the transfer of the diacylglyceryl group from phosphatidylglycerol to the sulfhydryl group of the N-terminal cysteine of a prolipoprotein, the first step in the formation of mature lipoproteins. The chain is Phosphatidylglycerol--prolipoprotein diacylglyceryl transferase from Acinetobacter baylyi (strain ATCC 33305 / BD413 / ADP1).